Here is a 69-residue protein sequence, read N- to C-terminus: DNA gyrase inhibitor YacG (69 aa).

Residues Cys13, Cys16, Cys32, and Cys36 each coordinate Zn(2+).

Belongs to the DNA gyrase inhibitor YacG family. In terms of assembly, interacts with GyrB. The cofactor is Zn(2+).

In terms of biological role, inhibits all the catalytic activities of DNA gyrase by preventing its interaction with DNA. Acts by binding directly to the C-terminal domain of GyrB, which probably disrupts DNA binding by the gyrase. The polypeptide is DNA gyrase inhibitor YacG (Neisseria meningitidis serogroup C / serotype 2a (strain ATCC 700532 / DSM 15464 / FAM18)).